The chain runs to 450 residues: Ammonium transporter Rh type A (450 aa).

At M1–K4 the chain is on the cytoplasmic side. A helical transmembrane segment spans residues F5 to E25. The Extracellular segment spans residues Y26–Y72. Residues N31, N41, N52, and N58 are each glycosylated (N-linked (GlcNAc...) asparagine). A disordered region spans residues Q34–S61. A helical membrane pass occupies residues P73–L93. Residues K94–G97 are Cytoplasmic-facing. The chain crosses the membrane as a helical span at residues F98–V118. The Extracellular portion of the chain corresponds to Q119–K134. Residues N135–G155 traverse the membrane as a helical segment. Residues K156–P159 lie on the Cytoplasmic side of the membrane. Residues I160–V180 traverse the membrane as a helical segment. The Extracellular portion of the chain corresponds to T181–T189. Residues G190 to L210 form a helical membrane-spanning segment. Over Y211–D229 the chain is Cytoplasmic. Residues L230 to I250 traverse the membrane as a helical segment. Topologically, residues A251 to A260 are extracellular. A helical transmembrane segment spans residues I261–L281. Residues V282–D289 lie on the Cytoplasmic side of the membrane. A helical transmembrane segment spans residues M290 to C307. The Extracellular portion of the chain corresponds to A308–E311. The helical transmembrane segment at I312 to Y332 threads the bilayer. Residues K333–C349 lie on the Cytoplasmic side of the membrane. Residues G350–I370 traverse the membrane as a helical segment. Residues S371–A384 lie on the Extracellular side of the membrane. Residues T385–L405 form a helical membrane-spanning segment. The Cytoplasmic segment spans residues K406–V450.

It belongs to the ammonium transporter (TC 2.A.49) family. Rh subfamily. In terms of assembly, homodimer. Heterotrimer; a RHCE monomer interacts with a RHAG homodimer. Component of the ankyrin-1 complex in the erythrocyte, composed of ANK1, RHCE, RHAG, SLC4A1, EPB42, GYPA, GYPB and AQP1. Interacts with GYPB (via the N-terminal); this interaction bridges the (RHAG)2(RHCE) heterotrimer with the SLC4A1 Band 3 I dimer complexed with GYPA. In terms of processing, glycosylated.

It is found in the membrane. It carries out the reaction methylamine(out) = methylamine(in). The catalysed reaction is NH4(+)(in) = NH4(+)(out). The enzyme catalyses CO2(out) = CO2(in). In terms of biological role, component of the ankyrin-1 complex, a multiprotein complex involved in the stability and shape of the erythrocyte membrane. Heterotrimer with RHCE (RHAG)2(RHCE), that transports ammonium and its related derivative methylammonium, in both neutral and ionic forms, across the erythrocyte membrane. The transport of NH4(+) is electrogenic and masks the NH3 transport. Also, may act as a CO2 channel. Moreover in erythrocyte, regulates RHD membrane expression and is associated with rhesus blood group antigen expression. This chain is Ammonium transporter Rh type A, found in Rattus norvegicus (Rat).